Reading from the N-terminus, the 265-residue chain is Undecaprenyl-diphosphatase (265 aa).

A run of 8 helical transmembrane segments spans residues 1–21, 39–61, 85–105, 115–135, 149–169, 187–207, 218–238, and 244–264; these read MDFI…FLPI, QGLA…YFRL, LAWA…MLTE, LIIA…DWAG, ILFI…RSGI, FSFL…ALDL, ALAL…HYFF, and IGML…FYLF.

The protein belongs to the UppP family.

It localises to the cell inner membrane. The catalysed reaction is di-trans,octa-cis-undecaprenyl diphosphate + H2O = di-trans,octa-cis-undecaprenyl phosphate + phosphate + H(+). Catalyzes the dephosphorylation of undecaprenyl diphosphate (UPP). Confers resistance to bacitracin. In Nitrosococcus oceani (strain ATCC 19707 / BCRC 17464 / JCM 30415 / NCIMB 11848 / C-107), this protein is Undecaprenyl-diphosphatase.